The sequence spans 1051 residues: Carbamoyl phosphate synthase large chain (1051 aa).

The interval 1–399 is carboxyphosphate synthetic domain; that stretch reads MRETPKKVLV…SLQKAIRMLD (399 aa). ATP-binding residues include R127, R167, G173, G174, K206, L208, E213, G239, V240, H241, Q282, and E296. Residues 131–325 form the ATP-grasp 1 domain; it reads RETMIENNLP…LAYVSAKLAL (195 aa). Mg(2+)-binding residues include Q282, E296, and N298. Positions 282, 296, and 298 each coordinate Mn(2+). Residues 400–548 form an oligomerization domain region; that stretch reads IGEPGVVGGK…LTYNGTEDDI (149 aa). The tract at residues 549-930 is carbamoyl phosphate synthetic domain; the sequence is EFSQGNKLLI…LKSWLSSMPN (382 aa). One can recognise an ATP-grasp 2 domain in the interval 673-863; sequence SKLLDKLGIS…LINESMKAIF (191 aa). ATP-binding residues include R709, K748, I750, E755, G779, V780, H781, S782, Q822, and E834. Mg(2+) contacts are provided by Q822, E834, and N836. Residues Q822, E834, and N836 each contribute to the Mn(2+) site. Residues 930 to 1051 enclose the MGS-like domain; that stretch reads NRIPNKNGIA…FEISEYGGGI (122 aa). Residues 931-1051 form an allosteric domain region; that stretch reads RIPNKNGIAL…FEISEYGGGI (121 aa).

Belongs to the CarB family. As to quaternary structure, composed of two chains; the small (or glutamine) chain promotes the hydrolysis of glutamine to ammonia, which is used by the large (or ammonia) chain to synthesize carbamoyl phosphate. Tetramer of heterodimers (alpha,beta)4. Mg(2+) serves as cofactor. Requires Mn(2+) as cofactor.

It catalyses the reaction hydrogencarbonate + L-glutamine + 2 ATP + H2O = carbamoyl phosphate + L-glutamate + 2 ADP + phosphate + 2 H(+). It carries out the reaction hydrogencarbonate + NH4(+) + 2 ATP = carbamoyl phosphate + 2 ADP + phosphate + 2 H(+). Its pathway is amino-acid biosynthesis; L-arginine biosynthesis; carbamoyl phosphate from bicarbonate: step 1/1. The protein operates within pyrimidine metabolism; UMP biosynthesis via de novo pathway; (S)-dihydroorotate from bicarbonate: step 1/3. Functionally, large subunit of the glutamine-dependent carbamoyl phosphate synthetase (CPSase). CPSase catalyzes the formation of carbamoyl phosphate from the ammonia moiety of glutamine, carbonate, and phosphate donated by ATP, constituting the first step of 2 biosynthetic pathways, one leading to arginine and/or urea and the other to pyrimidine nucleotides. The large subunit (synthetase) binds the substrates ammonia (free or transferred from glutamine from the small subunit), hydrogencarbonate and ATP and carries out an ATP-coupled ligase reaction, activating hydrogencarbonate by forming carboxy phosphate which reacts with ammonia to form carbamoyl phosphate. This chain is Carbamoyl phosphate synthase large chain, found in Saccharolobus solfataricus (strain ATCC 35092 / DSM 1617 / JCM 11322 / P2) (Sulfolobus solfataricus).